The primary structure comprises 86 residues: Small ribosomal subunit protein bS20 (86 aa).

The span at 1–11 shows a compositional bias: basic residues; it reads MANIKSAKKRA. The tract at residues 1–26 is disordered; that stretch reads MANIKSAKKRAITSEKNRQHNASRRS.

The protein belongs to the bacterial ribosomal protein bS20 family.

Its function is as follows. Binds directly to 16S ribosomal RNA. This chain is Small ribosomal subunit protein bS20, found in Pseudoalteromonas translucida (strain TAC 125).